We begin with the raw amino-acid sequence, 194 residues long: RFKKIRRLGALPGLTSKRPRSGSDLKNQLRSGKRSQYRIRLEEKQKLRFHYGLTERQLLKYVHIAGKAKGSTGQVLLQLLEMRLDNILFRLGMASTIPGARQLVTHRHILVNGRIVDIPSYRCKPRDIITTKDKQRSKALIQDYTASSPHEELPNHLTIDPIQYKGLVNQIIDSKWIGLKINELLVVEYYSRQT.

The region spanning 82–143 (MRLDNILFRL…KQRSKALIQD (62 aa)) is the S4 RNA-binding domain.

Belongs to the universal ribosomal protein uS4 family. In terms of assembly, part of the 30S ribosomal subunit. Contacts protein S5. The interaction surface between S4 and S5 is involved in control of translational fidelity.

It localises to the plastid. The protein localises to the chloroplast. In terms of biological role, one of the primary rRNA binding proteins, it binds directly to 16S rRNA where it nucleates assembly of the body of the 30S subunit. Its function is as follows. With S5 and S12 plays an important role in translational accuracy. The sequence is that of Small ribosomal subunit protein uS4c (rps4) from Bobartia gladiata (Sword rush-lily).